Consider the following 72-residue polypeptide: Threonine dehydratase operon activator protein (72 aa).

Probable trans-acting positive activator for the tdc operon. The polypeptide is Threonine dehydratase operon activator protein (tdcR) (Escherichia coli (strain K12)).